The chain runs to 280 residues: Tryptophan synthase alpha chain (280 aa).

Residues Glu-50 and Asp-61 each act as proton acceptor in the active site.

It belongs to the TrpA family. As to quaternary structure, tetramer of two alpha and two beta chains.

The enzyme catalyses (1S,2R)-1-C-(indol-3-yl)glycerol 3-phosphate + L-serine = D-glyceraldehyde 3-phosphate + L-tryptophan + H2O. It functions in the pathway amino-acid biosynthesis; L-tryptophan biosynthesis; L-tryptophan from chorismate: step 5/5. The alpha subunit is responsible for the aldol cleavage of indoleglycerol phosphate to indole and glyceraldehyde 3-phosphate. The sequence is that of Tryptophan synthase alpha chain from Methylorubrum extorquens (strain CM4 / NCIMB 13688) (Methylobacterium extorquens).